We begin with the raw amino-acid sequence, 424 residues long: CinA-like protein (424 aa).

This sequence belongs to the CinA family.

The sequence is that of CinA-like protein from Shewanella baltica (strain OS155 / ATCC BAA-1091).